Consider the following 253-residue polypeptide: Tryptophan synthase alpha chain (253 aa).

Catalysis depends on proton acceptor residues Glu-44 and Asp-55.

This sequence belongs to the TrpA family. In terms of assembly, tetramer of two alpha and two beta chains.

The enzyme catalyses (1S,2R)-1-C-(indol-3-yl)glycerol 3-phosphate + L-serine = D-glyceraldehyde 3-phosphate + L-tryptophan + H2O. The protein operates within amino-acid biosynthesis; L-tryptophan biosynthesis; L-tryptophan from chorismate: step 5/5. Functionally, the alpha subunit is responsible for the aldol cleavage of indoleglycerol phosphate to indole and glyceraldehyde 3-phosphate. This chain is Tryptophan synthase alpha chain (trpA), found in Chlamydia trachomatis serovar D (strain ATCC VR-885 / DSM 19411 / UW-3/Cx).